Consider the following 164-residue polypeptide: Hydroxylaminobenzene mutase HabB (164 aa).

4 consecutive transmembrane segments (helical) span residues 16–36 (LLQL…LLPM), 50–70 (GVLN…LSLG), 78–98 (FGFA…AGFW), and 121–141 (LIAF…ALAL).

The protein resides in the cell membrane. The catalysed reaction is N-phenylhydroxylamine = 2-aminophenol. Its activity is regulated as follows. Addition of ZnSO(4) decreases the activity to 70%. Functionally, catalyzes the rearrangement of hydroxylaminobenzene to 2-aminophenol. This chain is Hydroxylaminobenzene mutase HabB (habB), found in Ectopseudomonas oleovorans (Pseudomonas oleovorans).